The primary structure comprises 369 residues: RAB6-interacting golgin (369 aa).

A disordered region spans residues Met1 to Lys128. The span at Glu11–Arg27 shows a compositional bias: basic and acidic residues. 2 stretches are compositionally biased toward polar residues: residues Glu46–Leu61 and Ser82–Ser93. Residues Gln106 to Asn120 are compositionally biased toward basic and acidic residues. Positions Arg145 to Glu297 form a coiled coil. Residues Ile188–Thr369 form a necessary for interaction with RCHY1 region. The segment at Val334–Thr369 is disordered. A compositionally biased stretch (polar residues) spans Cys342–Asn361.

The protein belongs to the GORAB family. Interacts with SCYL1. Interacts with RCHY1 and RAB6A/RAB6.

The protein resides in the cytoplasm. It is found in the golgi apparatus. The sequence is that of RAB6-interacting golgin (GORAB) from Homo sapiens (Human).